The chain runs to 172 residues: MAKVSNYNNNNNNNNNNNNNNNNNNNYNQNSNNNINSNNNDKFNNRLKCLNCCRLGHTKANWWINNNNNNKDNSYNNNKINNIRDEEDVDLNGDDTFNDSNNDNSPSRGSINAIGENQEKLEKQNQMVISEKDCQENTSSKSIFSSNISIYRKGVKFIWNDKLCEYEINDKT.

2 disordered regions span residues 1–39 (MAKV…NSNN) and 90–112 (DLNG…GSIN). The span at 98–110 (NDSNNDNSPSRGS) shows a compositional bias: low complexity.

This is an uncharacterized protein from Dictyostelium discoideum (Social amoeba).